The sequence spans 506 residues: Maturase K (506 aa).

Belongs to the intron maturase 2 family. MatK subfamily.

Its subcellular location is the plastid. It is found in the chloroplast. In terms of biological role, usually encoded in the trnK tRNA gene intron. Probably assists in splicing its own and other chloroplast group II introns. The chain is Maturase K from Arctostaphylos uva-ursi (Bearberry).